The sequence spans 286 residues: Prepilin leader peptidase/N-methyltransferase (286 aa).

The chain crosses the membrane as a helical span at residues 11-31 (LGIFFVGLFSLMVGSFLNVVI). Zn(2+)-binding residues include Cys-74, Cys-77, Cys-99, and Cys-102. The next 6 membrane-spanning stretches (helical) occupy residues 106–126 (ISARYLLVELLTAALSVIVAF), 132–152 (LSLGFALVFTWTLIALCFIDA), 161–181 (LTLPLLWLGILAALFNVFINL), 185–205 (VIGAMIGYLSLWSVYWLFKLI), 231–251 (LPIILFSAAILGMIYALGIGL), and 257–277 (MPFGPFLAIAGWLTFLYGAQI).

It belongs to the peptidase A24 family. The cofactor is Zn(2+).

It localises to the cell inner membrane. The catalysed reaction is Typically cleaves a -Gly-|-Phe- bond to release an N-terminal, basic peptide of 5-8 residues from type IV prepilin, and then N-methylates the new N-terminal amino group, the methyl donor being S-adenosyl-L-methionine.. In terms of biological role, plays an essential role in type IV pili and type II pseudopili formation by proteolytically removing the leader sequence from substrate proteins and subsequently monomethylating the alpha-amino group of the newly exposed N-terminal phenylalanine. The chain is Prepilin leader peptidase/N-methyltransferase (fimP) from Dichelobacter nodosus (Bacteroides nodosus).